A 132-amino-acid chain; its full sequence is Agouti-signaling protein (132 aa).

The first 22 residues, 1 to 22 (MDVTRLLLATLLVFLCFFTANS), serve as a signal peptide directing secretion. N39 is a glycosylation site (N-linked (GlcNAc...) asparagine). The interval 62 to 85 (IGRKAAEKKRSSKKEASMKKVVRP) is disordered. The span at 65-79 (KAAEKKRSSKKEASM) shows a compositional bias: basic and acidic residues. 5 disulfide bridges follow: C93–C108, C100–C114, C107–C125, C111–C132, and C116–C123. The 40-residue stretch at 93 to 132 (CVATRNSCKPPAPACCDPCASCQCRFFRSACSCRVLSLNC) folds into the Agouti domain.

In terms of tissue distribution, widely expressed at low levels. Highly expressed in the skin. Expressed in adipose tissue.

It is found in the secreted. In terms of biological role, involved in the regulation of melanogenesis. The binding of ASP to MC1R precludes alpha-MSH initiated signaling and thus blocks production of cAMP, leading to a down-regulation of eumelanogenesis (brown/black pigment) and thus increasing synthesis of pheomelanin (yellow/red pigment). In higher primates, agouti may affect the quality of hair pigmentation rather than its pattern of deposition. Could well play a role in neuroendocrine aspects of melanocortin action. May have some functional role in regulating the lipid metabolism with adipocytes. This is Agouti-signaling protein (ASIP) from Homo sapiens (Human).